Here is a 106-residue protein sequence, read N- to C-terminus: L-rhamnose mutarotase (106 aa).

A substrate-binding site is contributed by Tyr20. Residue His24 is the Proton donor of the active site. Residues Tyr43 and 78 to 79 (WW) contribute to the substrate site.

It belongs to the rhamnose mutarotase family. In terms of assembly, homodimer.

Its subcellular location is the cytoplasm. It catalyses the reaction alpha-L-rhamnose = beta-L-rhamnose. It participates in carbohydrate metabolism; L-rhamnose metabolism. Involved in the anomeric conversion of L-rhamnose. This Brucella anthropi (strain ATCC 49188 / DSM 6882 / CCUG 24695 / JCM 21032 / LMG 3331 / NBRC 15819 / NCTC 12168 / Alc 37) (Ochrobactrum anthropi) protein is L-rhamnose mutarotase.